Here is a 152-residue protein sequence, read N- to C-terminus: Ribosome maturation factor RimP (152 aa).

Belongs to the RimP family.

Its subcellular location is the cytoplasm. Its function is as follows. Required for maturation of 30S ribosomal subunits. The chain is Ribosome maturation factor RimP from Salmonella arizonae (strain ATCC BAA-731 / CDC346-86 / RSK2980).